The primary structure comprises 248 residues: Adenylate kinase (248 aa).

37 to 42 serves as a coordination point for ATP; it reads GAGKGT. The interval 57–86 is NMP; sequence SPGNLLREEMNRNSPITAQIKDYVSKGQLV. Residues R63, 84-86, 111-114, and Q118 each bind AMP; these read QLV and GFPR. Residues 149 to 181 are LID; that stretch reads GRRFDPITGNTYHIIYDPPPPDIADRVVVRTDD. R150 contacts ATP. Residues R178 and R189 each coordinate AMP.

It belongs to the adenylate kinase family. Monomer.

Its subcellular location is the cytoplasm. The enzyme catalyses AMP + ATP = 2 ADP. In terms of biological role, catalyzes the reversible transfer of the terminal phosphate group between ATP and AMP. Plays an important role in cellular energy homeostasis and in adenine nucleotide metabolism. This Giardia intestinalis (Giardia lamblia) protein is Adenylate kinase.